We begin with the raw amino-acid sequence, 415 residues long: Serine hydroxymethyltransferase (415 aa).

(6S)-5,6,7,8-tetrahydrofolate-binding positions include L121 and 125-127 (GHL). The residue at position 229 (K229) is an N6-(pyridoxal phosphate)lysine. A (6S)-5,6,7,8-tetrahydrofolate-binding site is contributed by 352–354 (SPF).

It belongs to the SHMT family. In terms of assembly, homodimer. Pyridoxal 5'-phosphate is required as a cofactor.

It localises to the cytoplasm. The catalysed reaction is (6R)-5,10-methylene-5,6,7,8-tetrahydrofolate + glycine + H2O = (6S)-5,6,7,8-tetrahydrofolate + L-serine. Its pathway is one-carbon metabolism; tetrahydrofolate interconversion. It functions in the pathway amino-acid biosynthesis; glycine biosynthesis; glycine from L-serine: step 1/1. Functionally, catalyzes the reversible interconversion of serine and glycine with tetrahydrofolate (THF) serving as the one-carbon carrier. This reaction serves as the major source of one-carbon groups required for the biosynthesis of purines, thymidylate, methionine, and other important biomolecules. Also exhibits THF-independent aldolase activity toward beta-hydroxyamino acids, producing glycine and aldehydes, via a retro-aldol mechanism. In Methylobacillus flagellatus (strain ATCC 51484 / DSM 6875 / VKM B-1610 / KT), this protein is Serine hydroxymethyltransferase.